Consider the following 106-residue polypeptide: Large ribosomal subunit protein eL34 (106 aa).

It belongs to the eukaryotic ribosomal protein eL34 family.

This chain is Large ribosomal subunit protein eL34, found in Hyperthermus butylicus (strain DSM 5456 / JCM 9403 / PLM1-5).